Here is a 612-residue protein sequence, read N- to C-terminus: Methionine--tRNA ligase (612 aa).

A 'HIGH' region motif is present at residues 12–22 (PYANGPRHIGH). Residues C144, C147, C157, and C160 each contribute to the Zn(2+) site. A 'KMSKS' region motif is present at residues 350 to 354 (KFSSS). ATP is bound at residue S353. Positions 580-612 (IQPGTQLSKPKPLFPKLDPELAETGPEWAPVQK) are disordered.

Belongs to the class-I aminoacyl-tRNA synthetase family. MetG type 1 subfamily. Monomer. The cofactor is Zn(2+).

Its subcellular location is the cytoplasm. The enzyme catalyses tRNA(Met) + L-methionine + ATP = L-methionyl-tRNA(Met) + AMP + diphosphate. Its function is as follows. Is required not only for elongation of protein synthesis but also for the initiation of all mRNA translation through initiator tRNA(fMet) aminoacylation. This is Methionine--tRNA ligase from Corynebacterium jeikeium (strain K411).